The sequence spans 180 residues: Chromatin structure-remodeling complex protein RSC14 (180 aa).

As to quaternary structure, interacts with STH1, RSC3 and ARP9. Component of the two forms of the RSC complex composed of at least either RSC1 or RSC2, and ARP7, ARP9, LDB7, NPL6, RSC3, RSC30, RSC4, RSC58, RSC6, RSC8, RSC9, SFH1, STH1, HTL1 and probably RTT102. The complexes interact with histone and histone variant components of centromeric chromatin. Component of a fungal-specific module (HTL1-LDB7-NPL6-RSC3-RSC30) within the RSC complex.

It localises to the nucleus. Component of the chromatin structure-remodeling complex (RSC), which is involved in transcription regulation and nucleosome positioning. RSC is responsible for the transfer of a histone octamer from a nucleosome core particle to naked DNA. The reaction requires ATP and involves an activated RSC-nucleosome intermediate. Remodeling reaction also involves DNA translocation, DNA twist and conformational change. As a reconfigurer of centromeric and flanking nucleosomes, RSC complex is required both for proper kinetochore function in chromosome segregation and, via a PKC1-dependent signaling pathway, for organization of the cellular cytoskeleton. Together with HTL1, NPL6, RSC3, RSC30 components, defines a fungal-specific module within the RSC complex that plays a role in many cellular functions including the maintenance of cell wall integrity. May be involved in the transfer of mannosylphosphate (MP) groups into N-linked oligosaccharides. This chain is Chromatin structure-remodeling complex protein RSC14 (LDB7), found in Saccharomyces cerevisiae (strain ATCC 204508 / S288c) (Baker's yeast).